The primary structure comprises 219 residues: Uracil-DNA glycosylase (219 aa).

D64 (proton acceptor) is an active-site residue.

The protein belongs to the uracil-DNA glycosylase (UDG) superfamily. UNG family.

The protein localises to the cytoplasm. The enzyme catalyses Hydrolyzes single-stranded DNA or mismatched double-stranded DNA and polynucleotides, releasing free uracil.. Excises uracil residues from the DNA which can arise as a result of misincorporation of dUMP residues by DNA polymerase or due to deamination of cytosine. The chain is Uracil-DNA glycosylase from Leuconostoc citreum (strain KM20).